Reading from the N-terminus, the 465-residue chain is Adenosylhomocysteinase (465 aa).

3 residues coordinate substrate: threonine 56, aspartate 131, and glutamate 191. Residue 192-194 (TTT) coordinates NAD(+). Substrate contacts are provided by lysine 221 and aspartate 225. NAD(+)-binding positions include asparagine 226, 255–260 (GYGDVG), glutamate 278, asparagine 313, 334–336 (IGH), and asparagine 379.

Belongs to the adenosylhomocysteinase family. It depends on NAD(+) as a cofactor.

The protein resides in the cytoplasm. The catalysed reaction is S-adenosyl-L-homocysteine + H2O = L-homocysteine + adenosine. The protein operates within amino-acid biosynthesis; L-homocysteine biosynthesis; L-homocysteine from S-adenosyl-L-homocysteine: step 1/1. Its function is as follows. May play a key role in the regulation of the intracellular concentration of adenosylhomocysteine. The polypeptide is Adenosylhomocysteinase (Bartonella tribocorum (strain CIP 105476 / IBS 506)).